We begin with the raw amino-acid sequence, 278 residues long: Cyclin-C (278 aa).

The Cyclin N-terminal domain maps to 41–139 (NVIQALGEHL…ILECEFYLLE (99 aa)). Positions 247-278 (TILSKMPKPKPPPNSEGEQGPNGSQNSSYSQS) are disordered. A compositionally biased stretch (polar residues) spans 267–278 (PNGSQNSSYSQS). Ser-270 carries the post-translational modification Phosphoserine.

Belongs to the cyclin family. Cyclin C subfamily. As to quaternary structure, component of the Mediator complex, which is composed of MED1, MED4, MED6, MED7, MED8, MED9, MED10, MED11, MED12, MED13, MED13L, MED14, MED15, MED16, MED17, MED18, MED19, MED20, MED21, MED22, MED23, MED24, MED25, MED26, MED27, MED29, MED30, MED31, CCNC, CDK8 and CDC2L6/CDK11. The MED12, MED13, CCNC and CDK8 subunits form a distinct module termed the CDK8 module. Mediator containing the CDK8 module is less active than Mediator lacking this module in supporting transcriptional activation. Individual preparations of the Mediator complex lacking one or more distinct subunits have been variously termed ARC, CRSP, DRIP, PC2, SMCC and TRAP. The cylin/CDK pair formed by CCNC/CDK8 also associates with the large subunit of RNA polymerase II.

It is found in the nucleus. Its function is as follows. Component of the Mediator complex, a coactivator involved in regulated gene transcription of nearly all RNA polymerase II-dependent genes. Mediator functions as a bridge to convey information from gene-specific regulatory proteins to the basal RNA polymerase II transcription machinery. Mediator is recruited to promoters by direct interactions with regulatory proteins and serves as a scaffold for the assembly of a functional preinitiation complex with RNA polymerase II and the general transcription factors. Binds to and activates cyclin-dependent kinase CDK8 that phosphorylates the CTD (C-terminal domain) of the large subunit of RNA polymerase II (RNAp II), which may inhibit the formation of a transcription initiation complex. This chain is Cyclin-C (Ccnc), found in Rattus norvegicus (Rat).